Reading from the N-terminus, the 287-residue chain is ATP synthase gamma chain (287 aa).

The protein belongs to the ATPase gamma chain family. In terms of assembly, F-type ATPases have 2 components, CF(1) - the catalytic core - and CF(0) - the membrane proton channel. CF(1) has five subunits: alpha(3), beta(3), gamma(1), delta(1), epsilon(1). CF(0) has three main subunits: a, b and c.

The protein resides in the cell inner membrane. Produces ATP from ADP in the presence of a proton gradient across the membrane. The gamma chain is believed to be important in regulating ATPase activity and the flow of protons through the CF(0) complex. This is ATP synthase gamma chain from Stenotrophomonas maltophilia (strain K279a).